Consider the following 169-residue polypeptide: MTDSDHRLPDRPGEGDPGRGRRIGIDVGSVRVGVATSDPDGVLATPVETVRREKSSDRHVRRLAQLVTELEAVEVVVGLPRTLADRTGPAAHDAIDVAEALARRIAPVPVRMADERLTTVSAQRSLREAGVRAKGQRAMIDQVAAVGILQSWLDQRRAALAAPGEGGHG.

Residues 1 to 19 show a composition bias toward basic and acidic residues; that stretch reads MTDSDHRLPDRPGEGDPGR. Residues 1 to 24 are disordered; the sequence is MTDSDHRLPDRPGEGDPGRGRRIG.

The protein belongs to the YqgF nuclease family.

It localises to the cytoplasm. Functionally, could be a nuclease involved in processing of the 5'-end of pre-16S rRNA. In Mycobacterium sp. (strain KMS), this protein is Putative pre-16S rRNA nuclease.